Consider the following 1202-residue polypeptide: CHD3-type chromatin-remodeling factor CHR7 (1202 aa).

2 Chromo domains span residues 45-109 (GEIE…HPHL) and 142-201 (KTVD…RDKY). The region spanning 237–405 (RYSWSKKTNV…FALMHFLDAD (169 aa)) is the Helicase ATP-binding domain. An ATP-binding site is contributed by 250–257 (DEMGLGKT). The DEAH box motif lies at 356 to 359 (DEGH). A Helicase C-terminal domain is found at 528 to 679 (LLDKMMVKLK…HLVVGKQHLC (152 aa)). Positions 838-872 (TSDEEEEADEPEAARQRKPRTVTRPYRKRARDNSE) are disordered. Positions 853–867 (QRKPRTVTRPYRKRA) are enriched in basic residues.

It belongs to the SNF2/RAD54 helicase family.

Its subcellular location is the nucleus. Chromatin remodeling factor that represses the expression of embryonic trait genes upon and after seed germination and thus enables the developmental switch to post-germinative growth. In Arabidopsis thaliana (Mouse-ear cress), this protein is CHD3-type chromatin-remodeling factor CHR7.